The sequence spans 228 residues: Phosphatidylserine decarboxylase proenzyme (228 aa).

Ser-197 acts as the Schiff-base intermediate with substrate; via pyruvic acid in catalysis. Ser-197 bears the Pyruvic acid (Ser); by autocatalysis mark.

It belongs to the phosphatidylserine decarboxylase family. PSD-A subfamily. In terms of assembly, heterodimer of a large membrane-associated beta subunit and a small pyruvoyl-containing alpha subunit. The cofactor is pyruvate. Is synthesized initially as an inactive proenzyme. Formation of the active enzyme involves a self-maturation process in which the active site pyruvoyl group is generated from an internal serine residue via an autocatalytic post-translational modification. Two non-identical subunits are generated from the proenzyme in this reaction, and the pyruvate is formed at the N-terminus of the alpha chain, which is derived from the carboxyl end of the proenzyme. The post-translation cleavage follows an unusual pathway, termed non-hydrolytic serinolysis, in which the side chain hydroxyl group of the serine supplies its oxygen atom to form the C-terminus of the beta chain, while the remainder of the serine residue undergoes an oxidative deamination to produce ammonia and the pyruvoyl prosthetic group on the alpha chain.

It is found in the cell membrane. The enzyme catalyses a 1,2-diacyl-sn-glycero-3-phospho-L-serine + H(+) = a 1,2-diacyl-sn-glycero-3-phosphoethanolamine + CO2. Its pathway is phospholipid metabolism; phosphatidylethanolamine biosynthesis; phosphatidylethanolamine from CDP-diacylglycerol: step 2/2. In terms of biological role, catalyzes the formation of phosphatidylethanolamine (PtdEtn) from phosphatidylserine (PtdSer). This is Phosphatidylserine decarboxylase proenzyme from Bacteroides thetaiotaomicron (strain ATCC 29148 / DSM 2079 / JCM 5827 / CCUG 10774 / NCTC 10582 / VPI-5482 / E50).